We begin with the raw amino-acid sequence, 188 residues long: Large ribosomal subunit protein eL18 (188 aa).

Lys119 is covalently cross-linked (Glycyl lysine isopeptide (Lys-Gly) (interchain with G-Cter in SUMO2)). At Ser130 the chain carries Phosphoserine. Residues 150–188 (RHFGKAPGTPHSHTKPYVRSKGRKFERARGRRASRGYKN) are disordered. Thr158 is modified (phosphothreonine). Basic residues-rich tracts occupy residues 161-171 (SHTKPYVRSKG) and 178-188 (RGRRASRGYKN). Residue Lys164 forms a Glycyl lysine isopeptide (Lys-Gly) (interchain with G-Cter in SUMO2) linkage.

Belongs to the eukaryotic ribosomal protein eL18 family. In terms of assembly, component of the large ribosomal subunit.

Its subcellular location is the cytoplasm. The protein resides in the cytosol. It is found in the rough endoplasmic reticulum. Functionally, component of the large ribosomal subunit. The ribosome is a large ribonucleoprotein complex responsible for the synthesis of proteins in the cell. This chain is Large ribosomal subunit protein eL18 (Rpl18), found in Mus musculus (Mouse).